We begin with the raw amino-acid sequence, 537 residues long: CTP synthase (537 aa).

Residues 1-267 are amidoligase domain; sequence MTKYIFVTGG…DQIVCDHLKL (267 aa). Position 13 (serine 13) interacts with CTP. Serine 13 provides a ligand contact to UTP. 14–19 serves as a coordination point for ATP; the sequence is SIGKGI. Residue tyrosine 54 coordinates L-glutamine. Aspartate 71 is an ATP binding site. Positions 71 and 141 each coordinate Mg(2+). CTP-binding positions include 148–150, 188–193, and lysine 224; these read DIE and KTKPTQ. UTP is bound by residues 188 to 193 and lysine 224; that span reads KTKPTQ. Position 240–242 (240–242) interacts with ATP; it reads RDV. Residues 292–535 form the Glutamine amidotransferase type-1 domain; that stretch reads RIALVGKYVE…VTAAVKNKNQ (244 aa). Glycine 354 provides a ligand contact to L-glutamine. Cysteine 381 acts as the Nucleophile; for glutamine hydrolysis in catalysis. L-glutamine-binding positions include 382–385, glutamate 405, and arginine 463; that span reads LGMQ. Active-site residues include histidine 508 and glutamate 510.

The protein belongs to the CTP synthase family. Homotetramer.

It catalyses the reaction UTP + L-glutamine + ATP + H2O = CTP + L-glutamate + ADP + phosphate + 2 H(+). It carries out the reaction L-glutamine + H2O = L-glutamate + NH4(+). The enzyme catalyses UTP + NH4(+) + ATP = CTP + ADP + phosphate + 2 H(+). It functions in the pathway pyrimidine metabolism; CTP biosynthesis via de novo pathway; CTP from UDP: step 2/2. Allosterically activated by GTP, when glutamine is the substrate; GTP has no effect on the reaction when ammonia is the substrate. The allosteric effector GTP functions by stabilizing the protein conformation that binds the tetrahedral intermediate(s) formed during glutamine hydrolysis. Inhibited by the product CTP, via allosteric rather than competitive inhibition. Catalyzes the ATP-dependent amination of UTP to CTP with either L-glutamine or ammonia as the source of nitrogen. Regulates intracellular CTP levels through interactions with the four ribonucleotide triphosphates. This chain is CTP synthase, found in Streptococcus equi subsp. zooepidemicus (strain H70).